Here is a 41-residue protein sequence, read N- to C-terminus: Large ribosomal subunit protein bL36 (41 aa).

It belongs to the bacterial ribosomal protein bL36 family.

This is Large ribosomal subunit protein bL36 from Gluconobacter oxydans (strain 621H) (Gluconobacter suboxydans).